The primary structure comprises 207 residues: Protein FMP32, mitochondrial (207 aa).

The stretch at 100-136 forms a coiled coil; sequence ADRSEFHNIQNEYESVKNDLEKLRNKLREEITKTNAG. The chain crosses the membrane as a helical span at residues 184-206; that stretch reads VMQWLIGVCTGTFALVLAYMRLL.

Belongs to the CCDC90 family.

The protein resides in the mitochondrion. It is found in the membrane. The chain is Protein FMP32, mitochondrial (FMP32) from Saccharomyces cerevisiae (strain ATCC 204508 / S288c) (Baker's yeast).